The sequence spans 782 residues: Cadherin-5 (782 aa).

Residues 1–22 (MQVLVMLLAAAGTYLGLLTAPT) form the signal peptide. A propeptide spanning residues 23 to 44 (AASNPGRQDTPSTLPLHRRQKR) is cleaved from the precursor. Cadherin domains are found at residues 45–148 (DWIW…WPVF), 149–255 (TQLV…FPVF), 256–370 (TQTR…PPNF), 371–475 (KQPF…DNAP), and 476–592 (EFAK…MGAQ). Topologically, residues 45-598 (DWIWNQMHID…MGAQVGVSIQ (554 aa)) are extracellular. The Ca(2+) site is built by glutamate 55 and glutamate 56. Asparagine 58 carries an N-linked (GlcNAc...) asparagine glycan. Aspartate 106, glutamate 108, aspartate 140, isoleucine 141, asparagine 142, aspartate 143, and asparagine 144 together coordinate Ca(2+). A glycan (N-linked (GlcNAc...) asparagine) is linked at asparagine 154. Residues aspartate 174, aspartate 176, histidine 183, and aspartate 228 each contribute to the Ca(2+) site. N-linked (GlcNAc...) asparagine glycosylation is found at asparagine 360, asparagine 440, asparagine 522, and asparagine 534. A helical membrane pass occupies residues 599 to 619 (ALVAIFLCILTIAVISLLVYL). Residues 620 to 659 (RRRLRKQARAHGKSVPEIHEQLVTYDEEGGGEMDTTSYDV) form a required for interaction with PALS1 region. Residues 620–782 (RRRLRKQARA…GSDPREELLY (163 aa)) lie on the Cytoplasmic side of the membrane.

As to quaternary structure, part of a complex composed of AMOTL2, MAGI1 and CDH5, within the complex AMOTL2 acts as a scaffold protein for the interaction of MAGI1 with CDH5. The complex is required for coupling actin fibers to cell junctions in endothelial cells. Within the complex AMOTL2 (via its N-terminus) interacts with CDH5. Interacts (via cadherin 5 domain) with PTPRB. Interacts with TRPC4. Interacts with KRIT1. Interacts with PARD3. Interacts with RTN4 (isoform B). Interacts with PALS1; the interaction promotes PALS1 localization to cell junctions and is required for CDH5-mediated vascular lumen formation and endothelial cell. Interacts with CTNND1/p120-catenin; the interaction controls CADH5 endocytosis. In terms of processing, phosphorylated on tyrosine residues by KDR/VEGFR-2. Dephosphorylated by PTPRB. Post-translationally, O-glycosylated.

It is found in the cell junction. It localises to the adherens junction. Its subcellular location is the cell membrane. The protein localises to the cytoplasm. Its function is as follows. Cadherins are calcium-dependent cell adhesion proteins. They preferentially interact with themselves in a homophilic manner in connecting cells; cadherins may thus contribute to the sorting of heterogeneous cell types. This cadherin may play a important role in endothelial cell biology through control of the cohesion and organization of the intercellular junctions. It associates with alpha-catenin forming a link to the cytoskeleton. Plays a role in coupling actin fibers to cell junctions in endothelial cells, via acting as a cell junctional complex anchor for AMOTL2 and MAGI1. Acts in concert with KRIT1 and PALS1 to establish and maintain correct endothelial cell polarity and vascular lumen. These effects are mediated by recruitment and activation of the Par polarity complex and RAP1B. Required for activation of PRKCZ and for localization of phosphorylated PRKCZ, PARD3, TIAM1 and RAP1B to the cell junction. Associates with CTNND1/p120-catenin to control CADH5 endocytosis. The chain is Cadherin-5 from Sus scrofa (Pig).